Consider the following 158-residue polypeptide: Protein shisa-like-2B (158 aa).

Residues 65 to 85 (IGALVGLGIAALVLLAFVISV) traverse the membrane as a helical segment.

The protein belongs to the shisa family.

The protein resides in the membrane. The protein is Protein shisa-like-2B (Shisal2b) of Mus musculus (Mouse).